The chain runs to 360 residues: Aminomethyltransferase (360 aa).

The protein belongs to the GcvT family. In terms of assembly, the glycine cleavage system is composed of four proteins: P, T, L and H.

It carries out the reaction N(6)-[(R)-S(8)-aminomethyldihydrolipoyl]-L-lysyl-[protein] + (6S)-5,6,7,8-tetrahydrofolate = N(6)-[(R)-dihydrolipoyl]-L-lysyl-[protein] + (6R)-5,10-methylene-5,6,7,8-tetrahydrofolate + NH4(+). The glycine cleavage system catalyzes the degradation of glycine. The sequence is that of Aminomethyltransferase from Pseudoalteromonas translucida (strain TAC 125).